The sequence spans 218 residues: Small ribosomal subunit protein uS3 (218 aa).

The KH type-2 domain occupies 38-106 (IREYISKRLQ…RVHINIVEIK (69 aa)).

The protein belongs to the universal ribosomal protein uS3 family. Part of the 30S ribosomal subunit. Forms a tight complex with proteins S10 and S14.

Binds the lower part of the 30S subunit head. Binds mRNA in the 70S ribosome, positioning it for translation. The sequence is that of Small ribosomal subunit protein uS3 from Geobacillus kaustophilus (strain HTA426).